A 337-amino-acid polypeptide reads, in one-letter code: Glyceraldehyde-3-phosphate dehydrogenase (337 aa).

NAD(+) is bound by residues 12-13, Asp34, and Lys79; that span reads RI. Residues 150–152, Thr181, 210–211, and Arg233 contribute to the D-glyceraldehyde 3-phosphate site; these read SCT and TG. The Nucleophile role is filled by Cys151. NAD(+) is bound at residue Asn315.

It belongs to the glyceraldehyde-3-phosphate dehydrogenase family. In terms of assembly, homotetramer.

The protein localises to the cytoplasm. It carries out the reaction D-glyceraldehyde 3-phosphate + phosphate + NAD(+) = (2R)-3-phospho-glyceroyl phosphate + NADH + H(+). Its pathway is carbohydrate degradation; glycolysis; pyruvate from D-glyceraldehyde 3-phosphate: step 1/5. The sequence is that of Glyceraldehyde-3-phosphate dehydrogenase (GPD1) from Cochliobolus heterostrophus (Southern corn leaf blight fungus).